We begin with the raw amino-acid sequence, 21 residues long: Kassinatuerin-1 (21 aa).

At Ile-21 the chain carries Isoleucine amide.

Expressed by the skin dorsal glands.

The protein localises to the secreted. Shows broad-spectrum antimicrobial activity against the Gram-negative bacterium E.coli (MIC=6.25 uM), K.pneumoniae (MIC=25 uM), E.cloacae (MIC=6.25 uM), P.aeruginosa (MIC=25 uM), the Gram-positive bacterium S.aureus (MIC=6.25 uM), S.epidermidis (MIC=6.25 uM), E.faecalis (MIC=12.5 uM), and the fungus C.albicans (MIC=100 uM). Has no antimicrobial effect against P.mirabilis (MIC&gt;100 uM). Has relatively high cytolytic and hemolytic activities. Its alpha-helix has considerable amphipathic character. In Kassina senegalensis (Senegal running frog), this protein is Kassinatuerin-1.